Consider the following 300-residue polypeptide: N-carbamoylputrescine amidase (300 aa).

One can recognise a CN hydrolase domain in the interval 8–266 (VTVAALQFAC…EAVLVAQFDL (259 aa)). The active-site Proton acceptor is Glu47. Lys120 (proton donor) is an active-site residue. Cys157 (nucleophile) is an active-site residue.

Belongs to the carbon-nitrogen hydrolase superfamily. Homooctamer.

It catalyses the reaction N-carbamoylputrescine + H2O + 2 H(+) = putrescine + NH4(+) + CO2. The protein operates within amine and polyamine biosynthesis; putrescine biosynthesis via agmatine pathway; putrescine from N-carbamoylputrescine (amidase route): step 1/1. Involved in polyamine biosynthesis. This Solanum lycopersicum (Tomato) protein is N-carbamoylputrescine amidase (CPA).